The sequence spans 451 residues: Tubulin alpha-1 chain (451 aa).

Glutamine 11 is a binding site for GTP. Lysine 40 carries the N6-acetyllysine modification. GTP contacts are provided by glutamate 71, glycine 144, threonine 145, threonine 179, asparagine 206, and asparagine 228. Glutamate 71 serves as a coordination point for Mg(2+). Glutamate 254 is a catalytic residue. The tract at residues 432–451 (YEEVGADSAEGDEEDEGDEY) is disordered.

The protein belongs to the tubulin family. As to quaternary structure, dimer of alpha and beta chains. A typical microtubule is a hollow water-filled tube with an outer diameter of 25 nm and an inner diameter of 15 nM. Alpha-beta heterodimers associate head-to-tail to form protofilaments running lengthwise along the microtubule wall with the beta-tubulin subunit facing the microtubule plus end conferring a structural polarity. Microtubules usually have 13 protofilaments but different protofilament numbers can be found in some organisms and specialized cells. Mg(2+) serves as cofactor. In terms of processing, undergoes a tyrosination/detyrosination cycle, the cyclic removal and re-addition of a C-terminal tyrosine residue by the enzymes tubulin tyrosine carboxypeptidase (TTCP) and tubulin tyrosine ligase (TTL), respectively. Post-translationally, acetylation of alpha chains at Lys-40 stabilizes microtubules and affects affinity and processivity of microtubule motors. This modification has a role in multiple cellular functions, ranging from cell motility, cell cycle progression or cell differentiation to intracellular trafficking and signaling.

Its subcellular location is the cytoplasm. It is found in the cytoskeleton. It catalyses the reaction GTP + H2O = GDP + phosphate + H(+). Tubulin is the major constituent of microtubules, a cylinder consisting of laterally associated linear protofilaments composed of alpha- and beta-tubulin heterodimers. Microtubules grow by the addition of GTP-tubulin dimers to the microtubule end, where a stabilizing cap forms. Below the cap, tubulin dimers are in GDP-bound state, owing to GTPase activity of alpha-tubulin. The chain is Tubulin alpha-1 chain from Gossypium hirsutum (Upland cotton).